A 66-amino-acid polypeptide reads, in one-letter code: Large ribosomal subunit protein uL30 (66 aa).

It belongs to the universal ribosomal protein uL30 family. Part of the 50S ribosomal subunit.

This Chelativorans sp. (strain BNC1) protein is Large ribosomal subunit protein uL30.